The following is a 125-amino-acid chain: UPF0225 protein Cgl1438/cg1626 (125 aa).

This sequence belongs to the UPF0225 family.

In Corynebacterium glutamicum (strain ATCC 13032 / DSM 20300 / JCM 1318 / BCRC 11384 / CCUG 27702 / LMG 3730 / NBRC 12168 / NCIMB 10025 / NRRL B-2784 / 534), this protein is UPF0225 protein Cgl1438/cg1626.